The sequence spans 707 residues: Integrator complex subunit 13 (707 aa).

Residues 565-625 (PPEEEERKKR…AEAEVIKDSP (61 aa)) are compositionally biased toward basic and acidic residues. The tract at residues 565–651 (PPEEEERKKR…TGPAEKSKGP (87 aa)) is disordered. Residues 567–622 (EEEERKKRGRKREDKEEKAEKPPKENEHEKKWQESERVKSVLDREKEDLAEAEVIK) are a coiled coil. The Nuclear localization signal (NLS) signature appears at 573 to 583 (KRGRKREDKEE). A cleavage module binding motif (CMBM) region spans residues 650–695 (GPMSLLSLWSSRINTANSRKHQEFVGRLNSVNNKAELYQHLKEENG).

It belongs to the Integrator subunit 13 family. As to quaternary structure, component of the Integrator complex, composed of core subunits INTS1, INTS2, INTS3, INTS4, INTS5, INTS6, INTS7, INTS8, INTS9/RC74, INTS10, INTS11/CPSF3L, INTS12, INTS13, INTS14 and INTS15. The core complex associates with protein phosphatase 2A subunits PPP2CA and PPP2R1A, to form the Integrator-PP2A (INTAC) complex. INTS13 is part of the tail subcomplex, composed of INTS10, INTS13, INTS14 and INTS15.

The protein localises to the nucleus. Its subcellular location is the cytoplasm. Component of the integrator complex, a multiprotein complex that terminates RNA polymerase II (Pol II) transcription in the promoter-proximal region of genes. The integrator complex provides a quality checkpoint during transcription elongation by driving premature transcription termination of transcripts that are unfavorably configured for transcriptional elongation: the complex terminates transcription by (1) catalyzing dephosphorylation of the C-terminal domain (CTD) of Pol II subunit POLR2A/RPB1 and SUPT5H/SPT5, (2) degrading the exiting nascent RNA transcript via endonuclease activity and (3) promoting the release of Pol II from bound DNA. The integrator complex is also involved in terminating the synthesis of non-coding Pol II transcripts, such as enhancer RNAs (eRNAs), small nuclear RNAs (snRNAs), telomerase RNAs and long non-coding RNAs (lncRNAs). Within the integrator complex, INTS13 is part of the integrator tail module and acts as a platform for the recruitment of transcription factors at promoters. This is Integrator complex subunit 13 from Xenopus tropicalis (Western clawed frog).